Here is a 118-residue protein sequence, read N- to C-terminus: T cell receptor gamma variable 3 (118 aa).

The N-terminal stretch at 1–17 (MRWALLVLLAFLSPASQ) is a signal peptide. Positions 18-118 (KSSNLEGRTK…GVYYCATWDR (101 aa)) constitute an Ig-like domain. The cysteines at positions 41 and 113 are disulfide-linked. Residue Asn-106 is glycosylated (N-linked (GlcNAc...) asparagine).

As to quaternary structure, gamma-delta TR is a heterodimer composed of a gamma and delta chain; disulfide-linked. The gamma-delta TR is associated with the transmembrane signaling CD3 coreceptor proteins following the stoichiometry: a single gamma-delta TR heterodimer associates with one CD3D-CD3E heterodimer, one CD3G-CD3E heterodimer and one CD247 homodimer forming a stable octameric structure. Upon activation, gamma-delta TR complex associates with FCER1G to initiate intracellular signaling.

The protein resides in the cell membrane. Functionally, v region of the variable domain of T cell receptor (TR) gamma chain that participates in the antigen recognition. Gamma-delta TRs recognize a variety of self and foreign non-peptide antigens frequently expressed at the epithelial boundaries between the host and external environment, including endogenous lipids presented by MH-like protein CD1D and phosphoantigens presented by butyrophilin-like molecule BTN3A1. Upon antigen recognition induces rapid, innate-like immune responses involved in pathogen clearance and tissue repair. Binding of gamma-delta TR complex to antigen triggers phosphorylation of immunoreceptor tyrosine-based activation motifs (ITAMs) in the CD3 chains by the LCK and FYN kinases, allowing the recruitment, phosphorylation, and activation of ZAP70 that facilitates phosphorylation of the scaffolding proteins LCP2 and LAT. This lead to the formation of a supramolecular signalosome that recruits the phospholipase PLCG1, resulting in calcium mobilization and ERK activation, ultimately leading to T cell expansion and differentiation into effector cells. Gamma-delta TRs are produced through somatic rearrangement of a limited repertoire of variable (V), diversity (D), and joining (J) genes. The potential diversity of gamma-delta TRs is conferred by the unique ability to rearrange (D) genes in tandem and to utilize all three reading frames. The combinatorial diversity is considerably increased by the sequence exonuclease trimming and random nucleotide (N) region additions which occur during the V-(D)-J rearrangements. This Homo sapiens (Human) protein is T cell receptor gamma variable 3.